We begin with the raw amino-acid sequence, 565 residues long: Urocanate hydratase (565 aa).

Residues 58-59, Gln-136, 182-184, Glu-202, Arg-207, 245-246, 266-270, 276-277, and Tyr-325 contribute to the NAD(+) site; these read GG, GMG, NA, QTSAH, and YL. The active site involves Cys-413. An NAD(+)-binding site is contributed by Gly-495.

The protein belongs to the urocanase family. It depends on NAD(+) as a cofactor.

It is found in the cytoplasm. The catalysed reaction is 4-imidazolone-5-propanoate = trans-urocanate + H2O. The protein operates within amino-acid degradation; L-histidine degradation into L-glutamate; N-formimidoyl-L-glutamate from L-histidine: step 2/3. In terms of biological role, catalyzes the conversion of urocanate to 4-imidazolone-5-propionate. This Vibrio vulnificus (strain CMCP6) protein is Urocanate hydratase.